The primary structure comprises 221 residues: Mediator of RNA polymerase II transcription subunit 19a (221 aa).

Residues 101-221 (PVELPPAEKG…DEVGAIRVAG (121 aa)) are disordered. Basic residues predominate over residues 142 to 152 (EHKKHKHKHKD). The segment covering 153–178 (RSKDKDKDKDRDRKKDKNGHHDSGDH) has biased composition (basic and acidic residues). Positions 179-188 (SKKHHDKKRK) are enriched in basic residues.

This sequence belongs to the plant Mediator complex subunit 19 family. Component of the Mediator complex. Interacts with FIB2.

The protein resides in the nucleus. Its function is as follows. Component of the Mediator complex, a coactivator involved in the regulated transcription of nearly all RNA polymerase II-dependent genes. Mediator functions as a bridge to convey information from gene-specific regulatory proteins to the basal RNA polymerase II transcription machinery. The Mediator complex, having a compact conformation in its free form, is recruited to promoters by direct interactions with regulatory proteins and serves for the assembly of a functional preinitiation complex with RNA polymerase II and the general transcription factors. The polypeptide is Mediator of RNA polymerase II transcription subunit 19a (MED19A) (Arabidopsis thaliana (Mouse-ear cress)).